The sequence spans 295 residues: Protease HtpX (295 aa).

2 consecutive transmembrane segments (helical) span residues isoleucine 4–leucine 24 and glycine 34–serine 54. Position 139 (histidine 139) interacts with Zn(2+). Residue glutamate 140 is part of the active site. Histidine 143 contacts Zn(2+). Helical transmembrane passes span glycine 147–serine 167 and isoleucine 194–isoleucine 214. Zn(2+) is bound at residue glutamate 223.

It belongs to the peptidase M48B family. It depends on Zn(2+) as a cofactor.

The protein localises to the cell inner membrane. This Photorhabdus laumondii subsp. laumondii (strain DSM 15139 / CIP 105565 / TT01) (Photorhabdus luminescens subsp. laumondii) protein is Protease HtpX.